The primary structure comprises 277 residues: Insulin-induced gene 1 protein (277 aa).

Residues 1-84 lie on the Cytoplasmic side of the membrane; that stretch reads MPRLHDHFWS…PYPNTWHHRL (84 aa). Positions 51-66 are enriched in low complexity; that stretch reads HGAPDADPAPRGRSAA. Residues 51 to 73 form a disordered region; sequence HGAPDADPAPRGRSAAMSGPEPG. A helical membrane pass occupies residues 85-107; sequence LQRSLVLFSVGVVLALVLNLLQI. Topologically, residues 108–126 are lumenal; that stretch reads QRNVTLFPEEVIATIFSSA. The chain crosses the membrane as a helical span at residues 127-144; sequence WWVPPCCGTAAAVVGLLY. Residues 145 to 159 lie on the Cytoplasmic side of the membrane; the sequence is PCIDSHLGEPHKFKR. Residues lysine 156 and lysine 158 each participate in a glycyl lysine isopeptide (Lys-Gly) (interchain with G-Cter in ubiquitin) cross-link. Residues 160-182 traverse the membrane as a helical segment; that stretch reads EWASVMRCIAVFVGINHASAKLD. At 183–185 the chain is on the lumenal side; it reads FAN. A helical transmembrane segment spans residues 186 to 204; sequence NVQLSLTLAALSLGLWWTF. Topologically, residues 205 to 209 are cytoplasmic; that stretch reads DRSRS. Phosphoserine; by PCK1 is present on serine 207. The chain crosses the membrane as a helical span at residues 210–231; it reads GLGLGITIAFLATLITQFLVYN. At 232–245 the chain is on the lumenal side; it reads GVYQYTSPDFLYIR. A helical transmembrane segment spans residues 246 to 263; that stretch reads SWLPCIFFSGGVTVGNIG. Residues 264–277 lie on the Cytoplasmic side of the membrane; sequence RQLAMGVPEKPHSD. Residues 271 to 277 carry the KxHxx motif; the sequence is PEKPHSD.

This sequence belongs to the INSIG family. Interacts with SCAP; interaction is direct and only takes place in the presence of sterols; it prevents interaction between SCAP and the coat protein complex II (COPII). Associates with the SCAP-SREBP complex (composed of SCAP and SREBF1/SREBP1 or SREBF2/SREBP2); association is mediated via its interaction with SCAP and only takes place in the presence of sterols. Interaction with SCAP is mutually exclusive with PAQR3. Interacts with HMGCR (via its SSD); the interaction, accelerated by sterols, leads to the recruitment of HMGCR to AMFR/gp78 for its ubiquitination by the sterol-mediated ERAD pathway. Interacts with AMFR/gp78 (via its membrane domain); the interaction recruits HMCR at the ER membrane for its ubiquitination and degradation by the sterol-mediated ERAD pathway. Interacts with SOAT2/ACAT2; leading to promote recruitment of AMFR/gp78 and subsequent ubiquitination of SOAT2/ACAT2. Interacts with RNF139. Interacts with RNF145. Post-translationally, phosphorylation at Ser-207 by PCK1 reduces binding to oxysterol, disrupting the interaction between INSIG1 and SCAP, thereby promoting nuclear translocation of SREBP proteins (SREBF1/SREBP1 or SREBF2/SREBP2) and subsequent transcription of downstream lipogenesis-related genes. Ubiquitinated by AMFR/gp78 in response to sterol deprivation, leading to its degradation: when the SCAP-SREBP complex becomes dissociated from INSIG1, INSIG1 is then ubiquitinated and degraded in proteasomes. Although ubiquitination is required for rapid INSIG1 degradation, it is not required for release of the SCAP-SREBP complex. Ubiquitinated by RNF139. Expressed in all tissues tested with highest expression in the liver.

The protein localises to the endoplasmic reticulum membrane. Oxysterol-binding protein that mediates feedback control of cholesterol synthesis by controlling both endoplasmic reticulum to Golgi transport of SCAP and degradation of HMGCR. Acts as a negative regulator of cholesterol biosynthesis by mediating the retention of the SCAP-SREBP complex in the endoplasmic reticulum, thereby blocking the processing of sterol regulatory element-binding proteins (SREBPs) SREBF1/SREBP1 and SREBF2/SREBP2. Binds oxysterol, including 25-hydroxycholesterol, regulating interaction with SCAP and retention of the SCAP-SREBP complex in the endoplasmic reticulum. In presence of oxysterol, interacts with SCAP, retaining the SCAP-SREBP complex in the endoplasmic reticulum, thereby preventing SCAP from escorting SREBF1/SREBP1 and SREBF2/SREBP2 to the Golgi. Sterol deprivation or phosphorylation by PCK1 reduce oxysterol-binding, disrupting the interaction between INSIG1 and SCAP, thereby promoting Golgi transport of the SCAP-SREBP complex, followed by processing and nuclear translocation of SREBF1/SREBP1 and SREBF2/SREBP2. Also regulates cholesterol synthesis by regulating degradation of HMGCR: initiates the sterol-mediated ubiquitin-mediated endoplasmic reticulum-associated degradation (ERAD) of HMGCR via recruitment of the reductase to the ubiquitin ligases AMFR/gp78 and/or RNF139. Also regulates degradation of SOAT2/ACAT2 when the lipid levels are low: initiates the ubiquitin-mediated degradation of SOAT2/ACAT2 via recruitment of the ubiquitin ligases AMFR/gp78. The polypeptide is Insulin-induced gene 1 protein (Homo sapiens (Human)).